A 321-amino-acid polypeptide reads, in one-letter code: Glucokinase (321 aa).

8 to 13 (GDVGGT) serves as a coordination point for ATP.

Belongs to the bacterial glucokinase family.

It is found in the cytoplasm. The catalysed reaction is D-glucose + ATP = D-glucose 6-phosphate + ADP + H(+). The chain is Glucokinase from Shigella boydii serotype 18 (strain CDC 3083-94 / BS512).